We begin with the raw amino-acid sequence, 144 residues long: Mannitol-specific phosphotransferase enzyme IIA component (144 aa).

In terms of domain architecture, PTS EIIA type-2 spans 3-142; the sequence is ELFSNDNIFL…EEIKQVFEEA (140 aa). Residue histidine 63 is the Tele-phosphohistidine intermediate of the active site. At histidine 63 the chain carries Phosphohistidine; by HPr.

As to quaternary structure, homodimer or homotrimer. Seems to be a monomer when not phosphorylated.

The protein localises to the cytoplasm. In terms of biological role, the phosphoenolpyruvate-dependent sugar phosphotransferase system (sugar PTS), a major carbohydrate active transport system, catalyzes the phosphorylation of incoming sugar substrates concomitantly with their translocation across the cell membrane. The enzyme II CmtAB PTS system is involved in D-mannitol transport. The sequence is that of Mannitol-specific phosphotransferase enzyme IIA component (mtlF) from Staphylococcus aureus (strain COL).